Here is a 445-residue protein sequence, read N- to C-terminus: Argininosuccinate synthase (445 aa).

Residues 17–25 and Ala-43 contribute to the ATP site; that span reads AFSGGLDTS. Tyr-99 contacts L-citrulline. Residues Gly-129 and Thr-131 each coordinate ATP. 3 residues coordinate L-aspartate: Thr-131, Asn-135, and Asp-136. Position 135 (Asn-135) interacts with L-citrulline. Asp-136 serves as a coordination point for ATP. Residues Arg-139 and Ser-192 each contribute to the L-citrulline site. Asp-194 lines the ATP pocket. 3 residues coordinate L-citrulline: Thr-201, Glu-203, and Glu-280.

This sequence belongs to the argininosuccinate synthase family. Type 2 subfamily. In terms of assembly, homotetramer.

The protein localises to the cytoplasm. It catalyses the reaction L-citrulline + L-aspartate + ATP = 2-(N(omega)-L-arginino)succinate + AMP + diphosphate + H(+). The protein operates within amino-acid biosynthesis; L-arginine biosynthesis; L-arginine from L-ornithine and carbamoyl phosphate: step 2/3. The polypeptide is Argininosuccinate synthase (Ralstonia pickettii (strain 12J)).